We begin with the raw amino-acid sequence, 124 residues long: Acidic phospholipase A2 (124 aa).

Disulfide bonds link cysteine 26/cysteine 116, cysteine 28/cysteine 44, cysteine 43/cysteine 95, cysteine 49/cysteine 124, cysteine 50/cysteine 88, cysteine 57/cysteine 81, and cysteine 75/cysteine 86. Ca(2+) contacts are provided by tyrosine 27, glycine 29, and glycine 31. Histidine 47 is a catalytic residue. Aspartate 48 is a Ca(2+) binding site. Aspartate 89 is a catalytic residue.

The protein belongs to the phospholipase A2 family. Group II subfamily. D49 sub-subfamily. Ca(2+) serves as cofactor. As to expression, expressed by the venom gland.

The protein resides in the secreted. The enzyme catalyses a 1,2-diacyl-sn-glycero-3-phosphocholine + H2O = a 1-acyl-sn-glycero-3-phosphocholine + a fatty acid + H(+). Its function is as follows. Snake venom phospholipase A2 (PLA2) that inhibits ADP-induced platelet aggregation. PLA2 catalyzes the calcium-dependent hydrolysis of the 2-acyl groups in 3-sn-phosphoglycerides. This chain is Acidic phospholipase A2, found in Gloydius ussuriensis (Ussuri mamushi).